A 337-amino-acid chain; its full sequence is HTH-type transcriptional repressor PurR (337 aa).

The 55-residue stretch at 2–56 (ATIKDVAKLAAVSTTTVSHVINKTRFVAEATQKRVWEAVEELNYAPSAVARSLKC) folds into the HTH lacI-type domain. Residues 4–23 (IKDVAKLAAVSTTTVSHVIN) constitute a DNA-binding region (H-T-H motif). Residues 48 to 56 (SAVARSLKC) mediate DNA binding. 5 residues coordinate hypoxanthine: phenylalanine 73, lysine 189, threonine 191, phenylalanine 220, and aspartate 276.

As to quaternary structure, homodimer.

It participates in purine metabolism; purine nucleotide biosynthesis [regulation]. Its function is as follows. Is the main repressor of the genes involved in the de novo synthesis of purine nucleotides, regulating purB, purC, purEK, purF, purHD, purL, purMN and guaBA expression. PurR is allosterically activated to bind its cognate DNA by binding the purine corepressors, hypoxanthine or guanine, thereby effecting transcription repression. The chain is HTH-type transcriptional repressor PurR from Aliivibrio fischeri (strain MJ11) (Vibrio fischeri).